The following is a 142-amino-acid chain: uncharacterized protein (142 aa).

The interval 1–31 is disordered; sequence MSLPKKKKPEVEEEEKPEEEEEKEEEQEIDI. The span at 11 to 29 shows a compositional bias: acidic residues; it reads VEEEEKPEEEEEKEEEQEI.

This is an uncharacterized protein from Acidianus sp. F28 (AFV-2).